The following is a 367-amino-acid chain: MIESEHRPTQIRVNLDAIAENFEQVMTNLPPKTEAFAVVKANAYGHGAVAVAKKLSSQAAGFCVSNLDEALELRKAGIEHPILILGVVPVRFLPVAHQLNISVTVASLDWLQDAKDLEADLSGLTVHLKLDTGMGRIGFRKIADLLQAIAILEELEYDIEGVYTHFATADEVEQAHFESQLSVFKEFLDVLPITPRWIHASNSATSIWHADTVFNLVRLGNILYGLNPSGRVLELPFGVQPALSLVSEIVHVKQVEAGTTIGYGATYHSTDSEWIATVPIGYADGLVRSLQGLSVLVDGQACEIVGRISMDQITIRLPRAYPLGQKVTLIGQDGDKTISVQEWADRIGTINYEVVCLLTDRLPRIFE.

Catalysis depends on K40, which acts as the Proton acceptor; specific for D-alanine. K40 carries the N6-(pyridoxal phosphate)lysine modification. R136 serves as a coordination point for substrate. The active-site Proton acceptor; specific for L-alanine is Y263. Position 310 (M310) interacts with substrate.

This sequence belongs to the alanine racemase family. Pyridoxal 5'-phosphate serves as cofactor.

The catalysed reaction is L-alanine = D-alanine. It functions in the pathway amino-acid biosynthesis; D-alanine biosynthesis; D-alanine from L-alanine: step 1/1. Its function is as follows. Catalyzes the interconversion of L-alanine and D-alanine. May also act on other amino acids. This chain is Alanine racemase (alr), found in Streptococcus suis (strain 98HAH33).